Here is a 501-residue protein sequence, read N- to C-terminus: Cytochrome P450 2J1 (501 aa).

Cys447 provides a ligand contact to heme.

The protein belongs to the cytochrome P450 family. Heme serves as cofactor. In terms of tissue distribution, small intestine.

It is found in the endoplasmic reticulum membrane. Its subcellular location is the microsome membrane. The enzyme catalyses an organic molecule + reduced [NADPH--hemoprotein reductase] + O2 = an alcohol + oxidized [NADPH--hemoprotein reductase] + H2O + H(+). Its function is as follows. Catalyzes the N-demethylation of benzphetamine to formaldehyde. The chain is Cytochrome P450 2J1 (CYP2J1) from Oryctolagus cuniculus (Rabbit).